The sequence spans 927 residues: Autophagy-related protein 18h (927 aa).

Disordered regions lie at residues 1 to 25 (MKSNSKVNINNNGDNHNQTKNNGTN) and 333 to 353 (DGPGPSLSSSPGRKVGRVGSH). Residues 335-344 (PGPSLSSSPG) show a composition bias toward low complexity. WD repeat units follow at residues 379 to 419 (AHTS…TKNG) and 441 to 482 (MTSA…NVLE). 2 disordered regions span residues 750 to 788 (NRGFSGERDSDSSSSSDPGQVKEMHPFNGMVYPEDEERR) and 844 to 927 (IENS…SEEG). Positions 846–859 (NSSGISGDSNVSSN) are enriched in low complexity. The segment covering 896 to 907 (ETEHKDAPSDGK) has biased composition (basic and acidic residues).

This sequence belongs to the WD repeat PROPPIN family. In terms of assembly, component of the PI(3,5)P2 regulatory complex at least composed of ATG18, SAC/FIG4, FAB1 and VAC14. In terms of tissue distribution, expressed in roots, flowers and leaves.

The protein resides in the preautophagosomal structure membrane. The protein localises to the vacuole membrane. Its function is as follows. The PI(3,5)P2 regulatory complex regulates both the synthesis and turnover of phosphatidylinositol 3,5-bisphosphate (PtdIns(3,5)P2). Required for autophagy. The sequence is that of Autophagy-related protein 18h (ATG18H) from Arabidopsis thaliana (Mouse-ear cress).